The following is a 326-amino-acid chain: ATP synthase subunit b 2 (326 aa).

The chain crosses the membrane as a helical span at residues leucine 2–leucine 22. Basic and acidic residues-rich tracts occupy residues glutamine 275–asparagine 298 and proline 306–proline 326. A disordered region spans residues glutamine 275–proline 326.

Belongs to the ATPase B chain family. In terms of assembly, F-type ATPases have 2 components, F(1) - the catalytic core - and F(0) - the membrane proton channel. F(1) has five subunits: alpha(3), beta(3), gamma(1), delta(1), epsilon(1). F(0) has three main subunits: a(1), b(2) and c(10-14). The alpha and beta chains form an alternating ring which encloses part of the gamma chain. F(1) is attached to F(0) by a central stalk formed by the gamma and epsilon chains, while a peripheral stalk is formed by the delta and b chains.

It is found in the cell inner membrane. In terms of biological role, f(1)F(0) ATP synthase produces ATP from ADP in the presence of a proton or sodium gradient. F-type ATPases consist of two structural domains, F(1) containing the extramembraneous catalytic core and F(0) containing the membrane proton channel, linked together by a central stalk and a peripheral stalk. During catalysis, ATP synthesis in the catalytic domain of F(1) is coupled via a rotary mechanism of the central stalk subunits to proton translocation. Its function is as follows. Component of the F(0) channel, it forms part of the peripheral stalk, linking F(1) to F(0). The sequence is that of ATP synthase subunit b 2 from Albidiferax ferrireducens (strain ATCC BAA-621 / DSM 15236 / T118) (Rhodoferax ferrireducens).